Reading from the N-terminus, the 538-residue chain is Putative amidase kk1C (538 aa).

The interval 1–32 is disordered; it reads MTEPTWKTVASEKQQQRESKIPSEWQIPKSSH. Active-site charge relay system residues include K134 and S209. Catalysis depends on S233, which acts as the Acyl-ester intermediate.

Belongs to the amidase family.

The catalysed reaction is a monocarboxylic acid amide + H2O = a monocarboxylate + NH4(+). It participates in secondary metabolite biosynthesis. In terms of biological role, putative amidase; part of the gene cluster that mediates the biosynthesis of KK-1, a novel cyclic depsipeptide with 10 residues which is a promising active compound with high activity against many plant pathogens, especially Botrytis cinerea. The role of kk1C in KK-1 biosynthesis has still to be determined. The nonribosomal peptide synthetase (NRPS) kk1B catalyzes the elongation and cyclization of the decapeptide chain composed of 1 D-lactic acid residue (D-Lac), 1 pipecolic acid residue (Pip), 1 aspartic acid residue (Asp), 1 isoleucine residue (Ile), 1 glycine residue (Gly), 1 tyrosine residue (Tyr) and 4 valine residues (Val). The Asp, Ile and 3 Val residues are N-methylated by the 5 methyltransferase domains from the NRPS (found in modules 3, 5, 6, 7 and 9), whereas the Tyr residue is O-methylated by the cluster encoded O-methyltransferase kk1A. The thioesterase kk1J is likely to be involved in the corrective mechanism of peptide chain synthesis. The D-lactate dehydrogenase kk1H is involved in the synthesis of D-lactic acid from pyruvic acid, which is recognized by the A domain of the first kk1B module. The pyrroline-5-carboxylate reductase kk1I is involved in the synthesis of the L-pipecolic acid residue of KK-1 from delta-1-pyrroline-5-carboxylate (P5C), a metabolic intermediate of lysine. It is still unclear how kk1C and kk1D are involved in the production of KK-1. The polypeptide is Putative amidase kk1C (Curvularia clavata).